A 289-amino-acid polypeptide reads, in one-letter code: ATP synthase gamma chain (289 aa).

It belongs to the ATPase gamma chain family. F-type ATPases have 2 components, CF(1) - the catalytic core - and CF(0) - the membrane proton channel. CF(1) has five subunits: alpha(3), beta(3), gamma(1), delta(1), epsilon(1). CF(0) has three main subunits: a, b and c.

It is found in the cell membrane. Its function is as follows. Produces ATP from ADP in the presence of a proton gradient across the membrane. The gamma chain is believed to be important in regulating ATPase activity and the flow of protons through the CF(0) complex. The protein is ATP synthase gamma chain of Lactococcus lactis subsp. cremoris (strain MG1363).